Consider the following 831-residue polypeptide: MSMTTCECRSPQEQRLYDKIEGREDRFRKTHPRVFRLLERFEGQKPRIDIERALYFTQSMQETEGQPLVLRWAKALMHIARNMTVYVQEDQLLLGRAGCDGRYGILYPELDGDFLDIAVRDLPTRKTSPATITPEDARRVVEEIAPYWKGKTYHEALNAALPAEVHKLTYDDPEGLISRFIVNETSSFRSSIQWVHDYEKILKRGFNSIKKEAREKLAALDPLSAKDDREKRPFLEAVMIVCDAIVLWAKRHAVLAREMAEKESDPVRKAELLRMAENAEHVPGEPARDFWEACQSQWFTQMFSRIEQKTGTTISNGRMDQYFQPYYKQDREAGKITEAQAMELLECMWVGMAEFIDMYISPTGGAFNEGYAHWEAVTVGGQTPDGRDASNDLTYLILKSKREFPLHYPDLAARIHSRAPERYLWDVAETIKYGSGFPKLINDEEIVPLYVSKGATFEEALDYAVSGCTEARMPNRDTYTSGGAYINFAAAVEMVLRNGRMKKYGDQKLGVETGDPRSFTTWDQFWNAYVEQHLLFLKTAFTQQYIINKLRAEHFAQPMGSAMHDLCMKHCIDLHQEQIPEGINLGYFEYMGLGTVVDSLAAVKKLVFEEKKLSMDKLIAAIDADFEGYEDVRALLRSAPCYGNNDEYADAIGRDIDRISVEYGNKYSMSDLGIHNDVRYVPFTSHVPFGKVVSATPNGRTDGFPLSDGSSASHGADVNGPTAVLLSNCTTKNMGLRDRAARMLNIKFTPKCVEGEQGTEKLVSFIRTFCDLKLWHVQFNVVNKGTLVAAQKDPQKYRNLIVRIAGYSAYFVDLSPDLQNDLIARTEHDVM.

One can recognise a PFL domain in the interval 32-701 (PRVFRLLERF…VVSATPNGRT (670 aa)). Residues Arg189, Gln193, 468-470 (CTE), and Arg679 each bind 2-hydroxyethane-1-sulfonate. Cys468 serves as the catalytic Cysteine radical intermediate. Catalysis depends on Glu470, which acts as the Proton acceptor. The Glycine radical domain occupies 708 to 831 (DGSSASHGAD…LIARTEHDVM (124 aa)). A Glycine radical modification is found at Gly806.

This sequence belongs to the glycyl radical enzyme (GRE) family. Homodimer. In terms of processing, requires the activating protein IslB to generate the key active site glycyl radical on Gly-806 that is involved in catalysis.

It catalyses the reaction 2-hydroxyethane-1-sulfonate = acetaldehyde + sulfite + H(+). Its pathway is organosulfur degradation; alkanesulfonate degradation. Functionally, involved in an anaerobic respiration pathway that converts the sulfonate isethionate (2-hydroxyethanesulfonate) to ammonia, acetate and sulfide. Catalyzes the radical-mediated C-S bond cleavage of isethionate (2-hydroxyethanesulfonate) to form sulfite and acetaldehyde. The polypeptide is Isethionate sulfite-lyase (Desulfovibrio desulfuricans (strain ATCC 27774 / DSM 6949 / MB)).